The sequence spans 109 residues: LSM2-LSM8 complex subunit LSM8 (109 aa).

Residues 1–70 (MSATLKDYLN…IALVGLIDAE (70 aa)) form the Sm domain.

The protein belongs to the snRNP Sm proteins family. As to quaternary structure, component of the heptameric LSM2-LSM8 complex that forms a seven-membered ring structure with a donut shape; an RNA strand can pass through the hole in the center of the ring structure. The LSm subunits are arranged in the order LSM8, LSM2, LSM3, LSM6, LSM5, LSM7 and LSM4. Component of the spliceosome U4/U6-U5 tri-snRNP complex composed of the U4, U6 and U5 snRNAs and at least PRP3, PRP4, PRP6, PRP8, PRP18, PRP31, PRP38, SNU13, SNU23, SNU66, SNU114, SPP381, SMB1, SMD1, SMD2, SMD3, SMX2, SMX3, LSM2, LSM3, LSM4, LSM5, LSM6, LSM7, LSM8, BRR2 and DIB1.

It localises to the nucleus. The protein localises to the cytoplasm. Its function is as follows. Component of the nuclear LSM2-LSM8 complex, which is involved in spliceosome assembly. The LSM2-LSM8 complex plays a role in the biogenesis of the spliceosomal U4/U6-U5 tri-snRNP complex by accelerating PRP24-mediated annealing of U4/U6 di-snRNA. The LSM2-LSM8 complex binds U6 snRNA terminating with a non-cyclic 3' phosphate group. LSM2-LSM8 is probably also involved in degradation of nuclear pre-mRNA by targeting them for decapping. LSM2-LSM8 could be involved in processing of pre-tRNAs, pre-rRNAs and U3 snoRNA, although involvement may be indirect. This Saccharomyces cerevisiae (strain ATCC 204508 / S288c) (Baker's yeast) protein is LSM2-LSM8 complex subunit LSM8 (LSM8).